The sequence spans 588 residues: Probable G-protein coupled receptor 162 (588 aa).

Residues 1–17 lie on the Extracellular side of the membrane; the sequence is MARGGAGAEEASLRSNA. A helical membrane pass occupies residues 18–38; that stretch reads LSWLACGLLALLANAWIILSI. The Cytoplasmic segment spans residues 39-49; it reads SAKQQKHKPLE. A helical membrane pass occupies residues 50–70; the sequence is LLLCFLAGTHILMAAVPLTTF. Residues 71–91 lie on the Extracellular side of the membrane; it reads AVVQLRRQASSDYDWNESICK. The N-linked (GlcNAc...) asparagine glycan is linked to Asn86. The helical transmembrane segment at 92-112 threads the bilayer; that stretch reads VFVSTYYTLALATCFTVASLS. Over 113 to 133 the chain is Cytoplasmic; sequence YHRMWMVRWPVNYRLSNAKKQ. Residues 134 to 154 traverse the membrane as a helical segment; the sequence is ALHAVMGIWMVSFILSTLPSI. At 155 to 174 the chain is on the extracellular side; that stretch reads GWHNNGERYYARGCQFIVSK. Residues 175–195 traverse the membrane as a helical segment; it reads IGLGFGVCFSLLLLGGIVMGL. Topologically, residues 196–275 are cytoplasmic; that stretch reads VCVAITFYQT…SLQVTNLVSA (80 aa). The helical transmembrane segment at 276–296 threads the bilayer; sequence IVFLYDSLTGVPILVVSFFSL. Over 297–303 the chain is Extracellular; that stretch reads KSDSAPP. The chain crosses the membrane as a helical span at residues 304–324; it reads WMVLAVLWCSMAQTLLLPSFI. The Cytoplasmic segment spans residues 325–588; that stretch reads WSCERYRADV…GNPIFPQLTL (264 aa). Residues Ser413 and Ser435 each carry the phosphoserine modification. Disordered regions lie at residues 445-474 and 511-550; these read QSRA…AEGG and ETPL…AVGL. The segment covering 530–546 has biased composition (low complexity); it reads PLGLSPRRLSLGSPESR.

Belongs to the G-protein coupled receptor 1 family.

The protein localises to the cell membrane. In terms of biological role, orphan receptor. This Homo sapiens (Human) protein is Probable G-protein coupled receptor 162 (GPR162).